The following is a 94-amino-acid chain: Small ribosomal subunit protein bS6 (94 aa).

Belongs to the bacterial ribosomal protein bS6 family.

Its function is as follows. Binds together with bS18 to 16S ribosomal RNA. The sequence is that of Small ribosomal subunit protein bS6 from Fusobacterium nucleatum subsp. nucleatum (strain ATCC 25586 / DSM 15643 / BCRC 10681 / CIP 101130 / JCM 8532 / KCTC 2640 / LMG 13131 / VPI 4355).